The chain runs to 279 residues: Thymidylate synthase (279 aa).

Residue 133–134 (RR) participates in dUMP binding. Residue C154 is the Nucleophile of the active site. DUMP contacts are provided by residues 178–181 (RSND), N189, and 219–221 (HIY). Residue D181 coordinates (6R)-5,10-methylene-5,6,7,8-tetrahydrofolate. A278 provides a ligand contact to (6R)-5,10-methylene-5,6,7,8-tetrahydrofolate.

This sequence belongs to the thymidylate synthase family. Bacterial-type ThyA subfamily. As to quaternary structure, homodimer.

The protein localises to the cytoplasm. The enzyme catalyses dUMP + (6R)-5,10-methylene-5,6,7,8-tetrahydrofolate = 7,8-dihydrofolate + dTMP. Its pathway is pyrimidine metabolism; dTTP biosynthesis. Functionally, catalyzes the reductive methylation of 2'-deoxyuridine-5'-monophosphate (dUMP) to 2'-deoxythymidine-5'-monophosphate (dTMP) while utilizing 5,10-methylenetetrahydrofolate (mTHF) as the methyl donor and reductant in the reaction, yielding dihydrofolate (DHF) as a by-product. This enzymatic reaction provides an intracellular de novo source of dTMP, an essential precursor for DNA biosynthesis. This is Thymidylate synthase from Streptococcus gordonii (strain Challis / ATCC 35105 / BCRC 15272 / CH1 / DL1 / V288).